The following is a 115-amino-acid chain: U3-lycotoxin-Ls1o (115 aa).

An N-terminal signal peptide occupies residues 1-20 (MKFVLLFGVLLVTLFSYSSA). Positions 21–44 (EMLDDFDQADEDELLSLIEKEEAR) are excised as a propeptide. Intrachain disulfides connect cysteine 48/cysteine 63, cysteine 55/cysteine 72, cysteine 62/cysteine 87, and cysteine 74/cysteine 85.

It belongs to the neurotoxin 19 (CSTX) family. 01 subfamily. As to expression, expressed by the venom gland.

It localises to the secreted. The sequence is that of U3-lycotoxin-Ls1o from Lycosa singoriensis (Wolf spider).